A 32-amino-acid polypeptide reads, in one-letter code: ATP synthase 28 kDa subunit, mitochondrial (32 aa).

The protein localises to the mitochondrion. Its subcellular location is the mitochondrion inner membrane. Functionally, mitochondrial membrane ATP synthase (F(1)F(0) ATP synthase or Complex V) produces ATP from ADP in the presence of a proton gradient across the membrane which is generated by electron transport complexes of the respiratory chain. F-type ATPases consist of two structural domains, F(1) - containing the extramembraneous catalytic core and F(0) - containing the membrane proton channel, linked together by a central stalk and a peripheral stalk. During catalysis, ATP synthesis in the catalytic domain of F(1) is coupled via a rotary mechanism of the central stalk subunits to proton translocation. Part of the complex F(0) domain. This Spinacia oleracea (Spinach) protein is ATP synthase 28 kDa subunit, mitochondrial.